The primary structure comprises 193 residues: Putative zinc finger protein 726P1 (193 aa).

The C2H2-type 1; degenerate zinc finger occupies Tyr18–His40. Residues Tyr46–Cys68 form a C2H2-type 2; atypical zinc finger. A C2H2-type 3; degenerate zinc finger spans residues Tyr74–His96. The C2H2-type 4 zinc finger occupies Tyr102–His124. The C2H2-type 5; degenerate zinc-finger motif lies at Tyr130–His152. A C2H2-type 6 zinc finger spans residues Tyr158 to His180.

This Homo sapiens (Human) protein is Putative zinc finger protein 726P1 (ZNF726P1).